Reading from the N-terminus, the 125-residue chain is Small ribosomal subunit protein uS13 (125 aa).

The disordered stretch occupies residues 101–125 (QRTKTNARTRKGKRKTVANKKIAAK).

It belongs to the universal ribosomal protein uS13 family. Part of the 30S ribosomal subunit. Forms a loose heterodimer with protein S19. Forms two bridges to the 50S subunit in the 70S ribosome.

Its function is as follows. Located at the top of the head of the 30S subunit, it contacts several helices of the 16S rRNA. In the 70S ribosome it contacts the 23S rRNA (bridge B1a) and protein L5 of the 50S subunit (bridge B1b), connecting the 2 subunits; these bridges are implicated in subunit movement. Contacts the tRNAs in the A and P-sites. The sequence is that of Small ribosomal subunit protein uS13 from Borrelia duttonii (strain Ly).